A 631-amino-acid polypeptide reads, in one-letter code: MSHQEGSTDGLPDLGTESLFSSPEEQSGAVAATEASSDIDIATSELSVTVTGDGSDSRDGGFPNDASTENRSSDQESASEDIELESLEDFEHFLMSGESLFHYPLVGEEETEREEEDEEIQEEGGEEEEEEEEEEEEEEEEEEEEEEQPRAGPQGSGGNHEQYSLEEDQALEEWVSSETSALPRPRWQVVTALHQRQLGSRPRFVYEACGARAFVQRFRLQYRLADHVGCVNTVHFNQRGTRLASSGDDLKVIVWDWVRQRPVLNFESGHTNNVFQAKFLPNCGDSTLAMCARDGQVRVAELINASYFNNTKCVAQHRGPAHKLALEPDSPYKFLTSGEDAVVFTIDLRQDRPASKVVVTRENDKKVGLYTITVNPANTYQFAVGGQDQFVRIYDQRKIDKKENNGVLKKFTPHHLVNCDFPTNITCVVYSHDGTELLASYNDDDIYLFNSSHSDGAQYSKRFKGHRNNTTVKGVNFYGPRSEFVVSGSDCGHIFFWEKSSCQIIQFLKGSREGTINCLEPHPYLPVLACSGLDHDVKIWTPTAKAATELTGLKKVIKKNKWERDEDSLHHGSLFDQYMLWFLLRHVTQRGRHQDWRSGEAEFPDEESDESSSTSETSEEEVQDRVQCMPS.

Disordered regions lie at residues 1–91 (MSHQ…EDFE) and 108–163 (EEET…HEQY). The span at 44 to 54 (SELSVTVTGDG) shows a compositional bias: polar residues. Acidic residues-rich tracts occupy residues 77–88 (SASEDIELESLE) and 108–147 (EEETEREEEDEEIQEEGGEEEEEEEEEEEEEEEEEEEEEE). 7 WD repeats span residues 226 to 265 (DHVGCVNTVHFNQRGTRLASSGDDLKVIVWDWVRQRPVLN), 269 to 310 (GHTN…YFNN), 316 to 356 (QHRG…PASK), 364 to 404 (DKKV…KKEN), 420 to 459 (DFPTNITCVVYSHDGTELLASYNDDDIYLFNSSHSDGAQY), 467 to 507 (RNNT…IIQF), and 511 to 550 (SREGTINCLEPHPYLPVLACSGLDHDVKIWTPTAKAATEL). A disordered region spans residues 594-631 (QDWRSGEAEFPDEESDESSSTSETSEEEVQDRVQCMPS).

The protein belongs to the WD repeat DCAF8 family.

This Homo sapiens (Human) protein is DDB1- and CUL4-associated factor 8-like protein 2 (DCAF8L2).